Here is a 182-residue protein sequence, read N- to C-terminus: UPF0587 protein YCR090C (182 aa).

Positions 36, 39, 70, and 73 each coordinate Zn(2+).

Belongs to the UPF0587 family.

This Saccharomyces cerevisiae (strain ATCC 204508 / S288c) (Baker's yeast) protein is UPF0587 protein YCR090C.